The following is a 122-amino-acid chain: Large ribosomal subunit protein eL18 (122 aa).

Belongs to the eukaryotic ribosomal protein eL18 family.

This chain is Large ribosomal subunit protein eL18, found in Picrophilus torridus (strain ATCC 700027 / DSM 9790 / JCM 10055 / NBRC 100828 / KAW 2/3).